We begin with the raw amino-acid sequence, 807 residues long: Glycerol-3-phosphate acyltransferase (807 aa).

The HXXXXD motif signature appears at 308 to 313 (CHRSHM).

This sequence belongs to the GPAT/DAPAT family.

It localises to the cell inner membrane. The catalysed reaction is sn-glycerol 3-phosphate + an acyl-CoA = a 1-acyl-sn-glycero-3-phosphate + CoA. It functions in the pathway phospholipid metabolism; CDP-diacylglycerol biosynthesis; CDP-diacylglycerol from sn-glycerol 3-phosphate: step 1/3. The polypeptide is Glycerol-3-phosphate acyltransferase (Shewanella sp. (strain MR-7)).